The following is a 562-amino-acid chain: MFS-type transporter calB (562 aa).

Residues 1-16 (MDEVTRTAQRSPSITE) are compositionally biased toward polar residues. Positions 1–45 (MDEVTRTAQRSPSITETHAGETKLAGPGEKEGDVESPVDPSADSE) are disordered. A helical membrane pass occupies residues 57-77 (FAILASVTLSAFLMLLDGSII). A glycan (N-linked (GlcNAc...) asparagine) is linked at Asn83. Transmembrane regions (helical) follow at residues 94–113 (IGWYTAAYQLASAALQPLSG), 123–143 (WTYLFFFGLFELGSLICGVAN), 154–174 (VAGLGSSGLLNGGMTIIAGAV), 184–204 (GIYLGISQLGIVCGPLIGGAL), 213–233 (CFYINLPVGAVTAILLLFLQV), 256–276 (LIGFTLFAPAAIMVLLALYYG), 284–304 (SSQVIGLFCGAGVTIIVFALW), 329–349 (INGAALVASILVAAQYLPIYF), 362–382 (VNTLPGILSQLLTVILSGVLV), 389–409 (LPFAAAGSAISAVGNGIVTLF), 418–438 (WIGYQIVLGSGRGIGMQMGII), 451–471 (VGIAFMIFCQNFAGAIFVVVG), and 530–550 (VFYLLMSLSLAGFVAAFGMGW). Residue Asn557 is glycosylated (N-linked (GlcNAc...) asparagine).

Belongs to the major facilitator superfamily. TCR/Tet family.

The protein resides in the cell membrane. In terms of biological role, MFS-type transporter; part of the gene cluster that mediates the biosynthesis of calbistrin A and related compounds. Calbistrin A is a secondary metabolite with an interesting structure that was recently found to have bioactivity against leukemia cells. It consists of two polyketides linked by an ester bond: a bicyclic decalin containing polyketide and a linear 12 carbon dioic acid structure. Required for the secretion of calbistrin A and calbistrin C, as well as of related compounds decumbenone A, B and C. This chain is MFS-type transporter calB, found in Penicillium decumbens.